Here is a 553-residue protein sequence, read N- to C-terminus: Glycerol kinase 2 (553 aa).

Threonine 20 lines the substrate pocket. ATP is bound at residue arginine 24. Residues arginine 94, tyrosine 148, and aspartate 259 each coordinate substrate. ATP contacts are provided by residues threonine 281, glycine 326, and glycine 427 to asparagine 431. The helical transmembrane segment at isoleucine 526–alanine 546 threads the bilayer.

Belongs to the FGGY kinase family. As to quaternary structure, interacts with ARMC12. Interacts with PLD6. In terms of tissue distribution, testis-specific. Expressed in the midpiece of spermatozoa.

The protein localises to the mitochondrion outer membrane. It localises to the cytoplasm. It catalyses the reaction glycerol + ATP = sn-glycerol 3-phosphate + ADP + H(+). The protein operates within polyol metabolism; glycerol degradation via glycerol kinase pathway; sn-glycerol 3-phosphate from glycerol: step 1/1. In terms of biological role, key enzyme in the regulation of glycerol uptake and metabolism. Essential for male fertility and sperm mitochondrial sheath formation. Required for proper arrangement of crescent-like mitochondria to form the mitochondrial sheath during spermatogenesis. Can induce mitochondrial clustering through interactions with PLD6 and up-regulation of phosphatidic acid synthesis in the mitochondria. The protein is Glycerol kinase 2 (GK2) of Homo sapiens (Human).